The following is a 488-amino-acid chain: Protein unzipped (488 aa).

The N-terminal stretch at 1-21 (MTSNSCLISLGLLLVLIQILA) is a signal peptide. Topologically, residues 22 to 465 (PAKAAEHSVF…DVALAGFGVN (444 aa)) are extracellular. Residues Asn35, Asn232, Asn317, and Asn374 are each glycosylated (N-linked (GlcNAc...) asparagine). Positions 380–400 (TTTTTTTTSTSTTTHATTTST) are enriched in low complexity. The disordered stretch occupies residues 380–453 (TTTTTTTTST…EAPENMSSDP (74 aa)). Residue Asn448 is glycosylated (N-linked (GlcNAc...) asparagine). A helical transmembrane segment spans residues 466–486 (AAGSTFIAGSALLTLLLTIFL). The Cytoplasmic segment spans residues 487–488 (SL).

It is found in the membrane. In terms of biological role, required for normal axon patterning during neurogenesis. The sequence is that of Protein unzipped (uzip) from Drosophila melanogaster (Fruit fly).